We begin with the raw amino-acid sequence, 347 residues long: Phenylalanine--tRNA ligase alpha subunit (347 aa).

E261 serves as a coordination point for Mg(2+).

This sequence belongs to the class-II aminoacyl-tRNA synthetase family. Phe-tRNA synthetase alpha subunit type 1 subfamily. As to quaternary structure, tetramer of two alpha and two beta subunits. Mg(2+) serves as cofactor.

It localises to the cytoplasm. It carries out the reaction tRNA(Phe) + L-phenylalanine + ATP = L-phenylalanyl-tRNA(Phe) + AMP + diphosphate + H(+). The sequence is that of Phenylalanine--tRNA ligase alpha subunit from Streptococcus thermophilus (strain ATCC BAA-491 / LMD-9).